The following is a 242-amino-acid chain: Segregation and condensation protein A (242 aa).

It belongs to the ScpA family. Component of a cohesin-like complex composed of ScpA, ScpB and the Smc homodimer, in which ScpA and ScpB bind to the head domain of Smc. The presence of the three proteins is required for the association of the complex with DNA.

Its subcellular location is the cytoplasm. Functionally, participates in chromosomal partition during cell division. May act via the formation of a condensin-like complex containing Smc and ScpB that pull DNA away from mid-cell into both cell halves. The polypeptide is Segregation and condensation protein A (Streptococcus pneumoniae serotype 2 (strain D39 / NCTC 7466)).